Here is a 392-residue protein sequence, read N- to C-terminus: DNA-directed RNA polymerase subunit Rpo1C (392 aa).

The protein belongs to the RNA polymerase beta' chain family. As to quaternary structure, part of the RNA polymerase complex.

The protein localises to the cytoplasm. It catalyses the reaction RNA(n) + a ribonucleoside 5'-triphosphate = RNA(n+1) + diphosphate. In terms of biological role, DNA-dependent RNA polymerase (RNAP) catalyzes the transcription of DNA into RNA using the four ribonucleoside triphosphates as substrates. Forms part of the jaw domain. In Saccharolobus islandicus (strain Y.N.15.51 / Yellowstone #2) (Sulfolobus islandicus), this protein is DNA-directed RNA polymerase subunit Rpo1C.